Here is a 72-residue protein sequence, read N- to C-terminus: Large ribosomal subunit protein bL32c (72 aa).

Residues P49–E72 form a disordered region. A compositionally biased stretch (basic and acidic residues) spans D59–E72.

The protein belongs to the bacterial ribosomal protein bL32 family.

Its subcellular location is the plastid. It localises to the chloroplast. The polypeptide is Large ribosomal subunit protein bL32c (Ostreococcus tauri).